A 514-amino-acid chain; its full sequence is FAD-dependent monooxygenase CPUR_05423 (514 aa).

Residues Val-79 and Arg-146 each coordinate FAD. Arg-227 is an active-site residue. Positions 358 and 371 each coordinate FAD.

It belongs to the paxM FAD-dependent monooxygenase family. The cofactor is FAD.

It functions in the pathway pigment biosynthesis. FAD-dependent monooxygenase; part of the ergochrome gene cluster responsible for the typical purple-black color of the ergot sclerotia. The ergochrome gene cluster produces several ergot pigments including the yellow ergochrome secalonic acid and its derivatives, as well as the red anthraquinones endocrocin and clavorubin. The pathway begins with the synthesis of atrochrysone thioester by the polyketide synthase (PKS) CPUR_05437. The atrochrysone carboxyl ACP thioesterase CPUR_05436 then breaks the thioester bond and releases the atrochrysone carboxylic acid from CPUR_05437. The atrochrysone carboxylic acid is then converted to atrochrysone which is further transformed into emodin anthrone. The next step is performed by the anthrone oxygenase CPUR_05434 that catalyzes the oxidation of emodinanthrone to emodin. Emodin is further modified to yield monodictyphenone via several steps involving CPUR_05427, CPUR_05428, CPUR_05429 and CPUR_05430. The short chain dehydrogenase/reductase CPUR_05418 then catalyzes the C-5 ketoreduction to give the xanthone skeleton of the monomeric units. Ergochromes formation requires further dimerization steps of different xanthone units, probably catalyzed by the cytochrome P450 monooxygenase CPUR_05419. CPUR_05425, CPUR_05426 and CPUR_05431 are unique to Claviceps, thus it is likely that they are involved in further modification of xanthone units or in their dimerization. The yellow ergochromes and the red anthraquinone pigments endocrocin and clavorubin are products from the same PKS derived precursors and the latter are likely shunt products in the pathway of xanthone biosynthesis. It is proposed that atrochrysone carboxylic acid released from the PKS CPUR_05437 can also be converted to endocrocin anthrone which is further oxidized into endocrocin by CPUR_05435. Endocrocin could be then modified to clavorubin, possibly by CPUR_05423 and CPUR_05431. Clavorubin is the principal anthraquinone metabolite produced by the cluster with a much higher yield compared to endocrocin. This is FAD-dependent monooxygenase CPUR_05423 from Claviceps purpurea (strain 20.1) (Ergot fungus).